Here is a 234-residue protein sequence, read N- to C-terminus: Cell fusion protein dni1 (234 aa).

Residues 1–32 (MLFLHSVVQGTGTLCTLAAWILLALVMTGCQS) form the signal peptide. Topologically, residues 33 to 96 (STTSKFQLFS…RSKFLINEVH (64 aa)) are extracellular. A helical transmembrane segment spans residues 97–117 (PWMIVFSFCVCGVSFLMGVVS). The Cytoplasmic portion of the chain corresponds to 118 to 132 (SLPLIGRLEFLRNIR). A helical transmembrane segment spans residues 133–153 (ISLSFFSFFSILVTALFAHVA). The Extracellular segment spans residues 154-178 (VSSFVMAVGNGTQNRVTASLGKKAM). Residues 179-199 (IFLWCSMGLVTLTGITDSIIL) form a helical membrane-spanning segment. Residues 200–234 (LVTSRTKKIRKTILEKSKVLTPSSSFSSKSSTTKY) are Cytoplasmic-facing.

Belongs to the SUR7 family.

The protein resides in the cell membrane. It is found in the cell tip. Functionally, cell membrane protein which plays a relevant role in coordinating membrane organization and cell wall remodeling during mating. This is Cell fusion protein dni1 (dni1) from Schizosaccharomyces pombe (strain 972 / ATCC 24843) (Fission yeast).